The primary structure comprises 474 residues: tRNA-2-methylthio-N(6)-dimethylallyladenosine synthase (474 aa).

Residues 3–120 (KKLLIKTWGC…LPEMIKQSQS (118 aa)) enclose the MTTase N-terminal domain. 6 residues coordinate [4Fe-4S] cluster: Cys-12, Cys-49, Cys-83, Cys-157, Cys-161, and Cys-164. The 233-residue stretch at 143 to 375 (RAEGATAFVS…QQQINAQAMR (233 aa)) folds into the Radical SAM core domain. Residues 378 to 441 (RLMLGTEQRV…ANSLRGEIVR (64 aa)) form the TRAM domain.

The protein belongs to the methylthiotransferase family. MiaB subfamily. As to quaternary structure, monomer. [4Fe-4S] cluster serves as cofactor.

It is found in the cytoplasm. It carries out the reaction N(6)-dimethylallyladenosine(37) in tRNA + (sulfur carrier)-SH + AH2 + 2 S-adenosyl-L-methionine = 2-methylsulfanyl-N(6)-dimethylallyladenosine(37) in tRNA + (sulfur carrier)-H + 5'-deoxyadenosine + L-methionine + A + S-adenosyl-L-homocysteine + 2 H(+). In terms of biological role, catalyzes the methylthiolation of N6-(dimethylallyl)adenosine (i(6)A), leading to the formation of 2-methylthio-N6-(dimethylallyl)adenosine (ms(2)i(6)A) at position 37 in tRNAs that read codons beginning with uridine. The sequence is that of tRNA-2-methylthio-N(6)-dimethylallyladenosine synthase from Vibrio vulnificus (strain CMCP6).